The following is a 221-amino-acid chain: Endonuclease V (221 aa).

2 residues coordinate Mg(2+): D44 and D112.

The protein belongs to the endonuclease V family. The cofactor is Mg(2+).

Its subcellular location is the cytoplasm. It carries out the reaction Endonucleolytic cleavage at apurinic or apyrimidinic sites to products with a 5'-phosphate.. Its function is as follows. DNA repair enzyme involved in the repair of deaminated bases. Selectively cleaves double-stranded DNA at the second phosphodiester bond 3' to a deoxyinosine leaving behind the intact lesion on the nicked DNA. In Trichormus variabilis (strain ATCC 29413 / PCC 7937) (Anabaena variabilis), this protein is Endonuclease V.